A 703-amino-acid chain; its full sequence is Zinc finger CCCH domain-containing protein 36 (703 aa).

Disordered regions lie at residues 1–42 (MAGG…DPNG), 112–176 (LQLH…MKNK), 204–242 (VSGS…AGSS), and 442–481 (HGTL…SSSQ). Residues 9-25 (GLPAAGEAAKAGRVGVG) show a composition bias toward low complexity. The segment covering 112–125 (LQLHGDEKYQKKAG) has biased composition (basic and acidic residues). Over residues 149–169 (VSQSPPDSNALSSQRFGSSSP) the composition is skewed to polar residues. Residues 176 to 203 (KTRKRTCTFYAQGRCKNGKSCTFLHEGE) form a C3H1-type zinc finger. A compositionally biased stretch (basic and acidic residues) spans 451-468 (TPDKDASHHKGADFDKGG). The span at 470–481 (SRSTLHVSSSSQ) shows a compositional bias: low complexity.

In Oryza sativa subsp. japonica (Rice), this protein is Zinc finger CCCH domain-containing protein 36.